Consider the following 5054-residue polypeptide: MSRFSCIFPTLTDGYVPNLDQTRAAGRRTYTIDRRGWTAPSSQTESHILAAWGLVLSSYVGTDEVAFYIVPTTGPDTTALAELKVEGDMSRRSLINAAEQLLHPGPVGAGQVSGESANTIITFEKDIESLFVTQAEAANVGTAMAQALAEVGADDHNRLIKNLNLMSPTHLESIWQFNANVPGMWEECFHDVIERRAANRPHSLAVDAWDMKLTYADLVREARLLAAYLQHRGVRPGSVVPISFERSGAALVAMLAVSKAGGAFVSVPPTLPAGRLDAILEVIEAPFVVTWSKYEPFWAERLPTLPIDSYPKPSADATVKTLGKPEDLFYVIFTSGSTGRPKGCMLSHSNWLNGALRNAPSWKYGPESRVLQMLSHTFDMSLLEICTSLGSGACVCVPRTEEIETSVSDAINRWQVNHVIMTPSLARSLRRDDVPGLKTMCLGGEAFPREIVTMWSERINLWQFYGPSECSINSSSRPITRPDADPLNIGPPNSAACWVVDTQDYNKLVPVGAIGELLVSGPIVGMGYLKNPIKTAEAFLDEVGFVAKDDPQFGGFRFYRTGDLVRWNSDGTITFCGRADTQVKLNGQRLELAEVEYQLGLEAGVQYAIAMAPQSGRCKNNLIAVLTVKCGGASNQGNADDEIPLLDRHDPIVQQTVKKLRSQLQHALPRYMVPTIWAFVGRMPMSPSGKIDRVQLRNWVQEMSQETFDAITGRSFEAEDHVLGLSQLEQEIQLAWAEALGLSAAEVGLQQPFVALGGDSIKALDAVARCRARQIKISMVHILSCEGVREASSLAEVQETPAHQVAEIAVDYSDLWTRLSTEYDISKLGVTQVEEVEDVFPCTTMQEGMFLGQIRRPGAYHMRFFHRVQLKGGSLPTVERIQQAWASLVERHPSLRTVFVDDLSSEAIYHSVVLRSVPMELTMREVPRDLNPESALAMFTEELVPFRPNAPLHRMLLLTCRGRVPYLMLEISHVIMDGYALSVFRREFIRACSSTASLPRGPDYRMFANYHRTRQTDESAKYWTNYLADCVPCHIPTDPLSVPTDASPEWPRTLQRRDFGFDNSVAFLQRCKERQVTLACAIRAAWALVLRAYTQSRDVCFGYVSSGRNVPVPEVETIFGLCLSMQVCRAKLSEASTIASLARKIQEDYVASLPFQHYPLAEAQRGLKQTHGQGLFNTAISMEWVPPTAEDEDALLDLEEIREQDDPTEYDIAISVDIHEGHIKLGFLYWPNLSDFQITHLAEALQGAMNCFAFQPDVALNTLTLLQASDLCSTLTNGPTLLPLEAVRGNVISMIDRWVTRQPESPAIDGWDGSLTYKQLHEQSSWVARNLLHQGVKLGDRILVCADRSSRTVVTILGVVRAGCVLVLSNPTDPEKRLQWLAHKCNATLVVADPAYEERFATSGARVFSTTSVCAPAAWDYEFSALDDQDLVSILFTSGSTGTPKGILMDHGALATSVLLGHGRTLRFSRHTRMLHFASLTFDAALAEIFTTLAHGGCICVPCEEDRLSDVSGCISRFAVNTAMLTPSVGRLLDPEALPTLKALAMIGEPMSRLDVERFAPVLDLYNGAGPTETSIMVTIAGPMKPTDEPVNLGYAVAGVRLWVTEAENPNRLAPLGAVGELIVEGRLVTRGYLDDPARTRESFLPNLPWLPSQHALYRTGDLVRYAEDGSLRYMGRKDTQVKLRGQRIELQEVEYHLRKSLQQAQVVVEMVIPEGKIRAQASLVAFVSGLTAADVESSSARNFDQSMPMSQIALPGSTIQALEEALPRYMIPSVYFALDTIPLSVNGKADRRRLREIGAALLVSSTAHKNTVDGKSEPVKWTASSKLELTLLELWTTTLGLEAETIYGDDSFFELGGDSVSAMKLVATARDRFKLSLSVPQMFRHPTIHQLAAILGEATGQPESSASSTTEEGFTFSTPDDSSTNDGVDDDFLRLATAQLAQLAQEKGKKVDIAALLKQLQGGSSSCKTPSVSSSSSSSSSRKKKSAKVVSPVEAPAPVPVPFSLLDGGADVVEKIRAQAVEQCKILPGDIEDIYPATALQEGMMALMARTPGVYTTTLTCELPERVNLARLHSAWDKAAEAHPILRTRIILTENNTAVQVVQRAKELPWDAYSLQDGDPLPDLTSNMTLGSTLLRLAEIHRQNQPRMLLVAIHHALYDGWSMPLLKQAVEDVYHGQELWPQPFTPFINYLNEGKPAAQGYWTAHLDGFAGSVFPNLPSINHHIQPTERRTRSLAVPTAPPGSQYTMATKIQAAWAVTVSRYAEAEDIVFGTVSTGRSAPVPSIDRMVGPTITTVPVRISLGNQAERLTSLLQRVQEDGWNRMDHEHLGLQHIRRLGESAAAACNLQTLLVIQPREEPRAKSISTLLSGLQDVAELKGVDTYPLMLVCEPDGVSLHLTAVFDPAVLDAVMLDRMLAHWELVLNQIWSEPDMAVMGLDGVSYRDKQTLVRWNAGEKIADGCAHDAVYEWSVRTPHAPAVFAWDGKWTYEELEKCSSLIASQVLVHGVSSGDFVALYHEKSRWAAAAILAVFKAGGILVTLDPAHPKDRIKDILDQARPRLVLTSQSLLDEARELETPVMVVQFAASQPMPGECFPLPTVSPTQAAYAPFTSGSTGRPKGIPLEHRGLAASTASVARACLLRPASRVLHFASFAFDASMMEHLIAWHAGSCLCIPVETVRQTDLARCIRDFEVTWAFLTPSCLRLISPDDVQSLEALGLGGESMTPEDIFIWGPRLRQIVQLYGPAECSIVAALTEVTKPSENRLIGRPNACRCWVVDPHSPDRLAPLGAVGELVIEGITVGRGYIDDPERTTQAFIPPPTWIQTLYPNEQQPSRLYRTGDLVRYAGTDGKLTFIGRRDGQLKLHGQRIELADVEAHLRPLIPGTQKVVVEMVHSVGNHHPLLAAFVEEILTSQDQVEQVVNLLHPSQTQCALNVKAIDSALSQTVPQYMIPSMYLHISRLPLSASGKLNRRHLRRLVAEFPRQRLSEYAAGSGLAVPNRPATAQEREMQAIWARVLSVDPDTIGVNEDFFRIGGDSISGMQVATRCNAAGMHITSADLFQHRTIEQLMRHLSANGKTGSASISLPPEPVDEWVPLAPIQQLFFEIAPQGPDHFNQSLLLRTSRRVSAEKLAGGLDILVGRHSMLRARFCRDDSGQWSQQVRSRGPYPASAFYRLTTHNHIAPELLSSLLAASQMALSIQEGPLLAVDLVNLTDDTQLVYLVAHHLIIDLVSWRILHAELEEYLQTGSFASTTGSVPFLTWSRAQAEYSANHLTPTLPLPGFQEANDGFDASRYWGISCESNTFGQTSTSTFTLDQTVTDQLFGPANNVLDTRPAEILQAALWYSFTQSLTDRPGPSIYVEGHGREPWTGSIDLSGTVGWFTTMSPLVSAPWDSLSQTSMRDFLDALSYIKDQRRRIPANGWAYFTSRYLNDEGKVAYGRMKPVVEILFNYMGQYQEMNREDAILQLAGDGIQSGTGAADVADNVPRFSLIDVSAFISNGCLTFQFILPKSLQQDSRLQGCFQEYERTLVAAANSLSTEGPRKTLADFPLMPALTYDQLSQCLDHTLPSMGLCARDVVDIYPCSPVQQGMLLAQLRDRQAYQQRFRFQVKSRGSTDRLTLEKLKDAWTEVINRHDILRTLLLPVSDYSHLDQVVMAPGSLQHLVRINAMDTNPTQGLPHSINITSDSTGTVICEWNVSHALVDAMSIAVIQQEVNEALEGSLGQHQKTPRYADYIQWLSLQDNTETQAYWKKYLEGVEPCLFPKLASSTDKVNPEGTISAIRATWTRDSRLDKLCHTHGITLTNLFHIVWSLLLSAYLGTDKVCFGYTTLGRDVPVDGVEKMVGPLVNVIATTIQLQEDDSILDALLTHQTHLSNSLQHQHYALADVYASLGLVGSQLFNTIVSLQDISHFDANDERPTRVEMLPANDVSEYDVALNIGVDQSSIQVVCSYRTLSLSVEQADALLRTTSHVLDEILRDPKQPLRDLEVISPQCKEQLVKWNAAMPAPTDEYIHEKIQDQCRLHSSREAACAWDGIFTFAEVDDLSSRLAARLIRMGVTSGHIIPIYSPKSRWTVIAILGVLKTGAAFTLLETSHPTARLRVICNEIKADIIIAPASHAVPAATLAPILVVLDSITSMSPQESDLLPAVGMPPAAEALAYLIFTSGSTGNPKGVMVTHQNLCSNASIMTTSVNMTSDSRVLHFASHAFDACLWEIFGALFAGACLIIPSESETKEDLAGCIERMVVTWAFLTPSVARILKPEALPSLRNLVLGGEPIAASDLDMWRGHVQVVCAYGPTETAILASTTSPSTFPSDGKDIGVPTGSSLWIVDKQNYNKLAPHGATGELLIEGPNVSQGYLGDPEKTNEAFPVAPRWLSQLRKSPTRVYRTGDLVRFNTSTGTIHFVGRKDNQIKFHGQRIELGDIEHHAQQAFSNASMVIVDLITPEQPQQPYIVAFVHQADTRTGTADPIDTILLPPSESFRADAIGAQNHMHKRLPHYMVPTAFLPLHRLPLSGTGKADRKRLRQCALSLSSLELNAYRATASAKRMPFTAAECKMQELVATVLGRDMSEIGMDDSFFYLGGDSIQAMRLVSEGRQQGLTLSLQAIFDAPRLGDLAYRTANLVRVSEPAPPTLPATSSDDCDHKETIVAALPIKKTDVAEVLPTTSFQRTWLDSQLKSYIVVDIPGPIDLARLRTAIQRVVKAHPILRASFVPYETTTMQVILRTAVVITKADLSTTTVEGICRKDANAPMAPGTPYLRVILATQGEVDRKLIMRLSHAQYDGISLSLLMNDLSHAYASESRPLPSSHLPAFNDYITYQQTQGADPTATTFWHRLLKDVPITYLDLQPAETPTSNGSLITRTRDINIAAFPSLPNGITTATAVKAAWSLVLAQKTGSLAVIFGQVVHGRGIALTGVEGIVGPCANITPVVARLGPQTTRMELMQTLQDQHRSAMPYETAGRKELQTIVQHQNNVMADDMELSLGEARCRVDLRAVDHVPQEVWVYSSIDGGRPGMLEVKIMSSTLVLSEEVAEELMDLLVEMMKRLFSDPEGVCV.

The segment at 194 to 585 (ERRAANRPHS…CGRADTQVKL (392 aa)) is adenylation 1. In terms of domain architecture, Carrier 1 spans 723-799 (LGLSQLEQEI…EASSLAEVQE (77 aa)). Ser-760 bears the O-(pantetheine 4'-phosphoryl)serine mark. The interval 837–1268 (EDVFPCTTMQ…ALNTLTLLQA (432 aa)) is condensation 1. The interval 1296–1685 (DRWVTRQPES…GRKDTQVKLR (390 aa)) is adenylation 2. A Carrier 2 domain is found at 1823 to 1900 (TASSKLELTL…QLAAILGEAT (78 aa)). Ser-1860 is modified (O-(pantetheine 4'-phosphoryl)serine). 2 disordered regions span residues 1899–1929 (ATGQPESSASSTTEEGFTFSTPDDSSTNDGV) and 1964–1994 (GSSSCKTPSVSSSSSSSSSRKKKSAKVVSPV). 2 stretches are compositionally biased toward low complexity: residues 1904–1927 (ESSASSTTEEGFTFSTPDDSSTND) and 1965–1981 (SSSCKTPSVSSSSSSSS). A condensation 2 region spans residues 2033–2448 (EDIYPATALQ…GVSYRDKQTL (416 aa)). Positions 2471–2863 (VRTPHAPAVF…IGRRDGQLKL (393 aa)) are adenylation 3. The 77-residue stretch at 2999–3075 (RPATAQEREM…QLMRHLSANG (77 aa)) folds into the Carrier 3 domain. Ser-3036 is subject to O-(pantetheine 4'-phosphoryl)serine. Condensation regions lie at residues 3092-3557 (WVPL…TYDQ) and 3578-3997 (DIYP…EQLV). Positions 4022-4412 (HSSREAACAW…VGRKDNQIKF (391 aa)) are adenylation 4. The Carrier 4 domain maps to 4546 to 4622 (MPFTAAECKM…DLAYRTANLV (77 aa)). Position 4583 is an O-(pantetheine 4'-phosphoryl)serine (Ser-4583). The interval 4659–4972 (EVLPTTSFQR…LQTIVQHQNN (314 aa)) is condensation 5.

The protein belongs to the NRP synthetase family.

The protein operates within secondary metabolite biosynthesis. In terms of biological role, nonribosomal peptide synthetase; part of the gene cluster that mediates the biosynthesis of malformins, cyclic pentapeptides with a disulfide bond between 2 consecutive cysteins, that show potential anti-tumor as well as antimalarial and antitrypanosomal properties. The nonribosomal peptide synthetase mlfA is responsible of the formation of the cyclic pentapeptide. The malformin biosynthesis clusters in malformin-producing fungi also contain enzymes involved in the formation of the disulfide bond between the two consecutive cysteins within malformins, in addition to additional tailoring enzymes such as methyltransferases or oxidoreductases. They are also composed of up to 4 major facilitator superfamily transporters, and transcription factors probably involved in the regulation of the expression of those clusters. This is Malformin synthetase mlfA from Aspergillus niger (strain ATCC MYA-4892 / CBS 513.88 / FGSC A1513).